The primary structure comprises 272 residues: UPF0759 protein YecE (272 aa).

Belongs to the UPF0759 family.

The chain is UPF0759 protein YecE (yecE) from Escherichia coli (strain K12).